The chain runs to 130 residues: Methylglyoxal synthase (130 aa).

An MGS-like domain is found at 1–130 (MSKPRIALIA…DLARTMQDVC (130 aa)). Residues His11, Lys15, 37 to 40 (TGTT), and 57 to 58 (SG) contribute to the substrate site. The active-site Proton donor/acceptor is Asp63. Substrate is bound at residue His90.

Belongs to the methylglyoxal synthase family.

It catalyses the reaction dihydroxyacetone phosphate = methylglyoxal + phosphate. In terms of biological role, catalyzes the formation of methylglyoxal from dihydroxyacetone phosphate. This Burkholderia multivorans (strain ATCC 17616 / 249) protein is Methylglyoxal synthase.